Reading from the N-terminus, the 484-residue chain is Iroquois-class homeodomain protein IRX-5 (484 aa).

Residues 112-174 (DPAYRKNATR…NARRRLKKEN (63 aa)) constitute a DNA-binding region (homeobox; TALE-type). Disordered regions lie at residues 176–393 (MTWT…QCPF) and 424–443 (GHPGPGPSPTAGPGSHFNGL). Acidic residues predominate over residues 185-202 (EDEEEEENIDLEKNDEDE). 2 stretches are compositionally biased toward basic and acidic residues: residues 203–212 (PQKPEDKGDL) and 249–265 (SDFKESSSEGRHDELPR). Ser-273 is subject to Phosphoserine. Residues 318 to 328 (SPPPPPPPPPA) are compositionally biased toward pro residues. The segment covering 375 to 389 (SRASPAPAPARSPSA) has biased composition (low complexity). At Ser-465 the chain carries Phosphoserine.

The protein belongs to the TALE/IRO homeobox family. As to expression, not expressed in the developing metanephric kidney or adult kidney.

It localises to the nucleus. Functionally, establishes the cardiac repolarization gradient by its repressive actions on the KCND2 potassium-channel gene. Required for retinal cone bipolar cell differentiation. May regulate contrast adaptation in the retina and control specific aspects of visual function in circuits of the mammalian retina. Involved in craniofacial and gonadal development. Modulates the migration of progenitor cell populations in branchial arches and gonads by repressing CXCL12. This chain is Iroquois-class homeodomain protein IRX-5 (Irx5), found in Mus musculus (Mouse).